A 121-amino-acid chain; its full sequence is Dihydroneopterin aldolase (121 aa).

Residues Glu-25 and Met-114 each coordinate substrate.

The protein belongs to the archaeal dihydroneopterin aldolase family. Homotetramer.

The catalysed reaction is 7,8-dihydroneopterin = 6-hydroxymethyl-7,8-dihydropterin + glycolaldehyde. It participates in cofactor biosynthesis; 5,6,7,8-tetrahydromethanopterin biosynthesis. Its function is as follows. Catalyzes the conversion of 7,8-dihydroneopterin (H2Neo) to 6-hydroxymethyl-7,8-dihydropterin (6-HMD). This Methanocaldococcus jannaschii (strain ATCC 43067 / DSM 2661 / JAL-1 / JCM 10045 / NBRC 100440) (Methanococcus jannaschii) protein is Dihydroneopterin aldolase.